A 220-amino-acid chain; its full sequence is Orotate phosphoribosyltransferase (220 aa).

Lysine 26 is a binding site for 5-phospho-alpha-D-ribose 1-diphosphate. 34 to 35 (FF) is an orotate binding site. 5-phospho-alpha-D-ribose 1-diphosphate is bound by residues 72-73 (YK), arginine 99, lysine 100, lysine 103, histidine 105, and 125-133 (DDVISAGTS). Residues serine 129 and arginine 157 each contribute to the orotate site.

The protein belongs to the purine/pyrimidine phosphoribosyltransferase family. PyrE subfamily. In terms of assembly, homodimer. Requires Mg(2+) as cofactor.

The catalysed reaction is orotidine 5'-phosphate + diphosphate = orotate + 5-phospho-alpha-D-ribose 1-diphosphate. The protein operates within pyrimidine metabolism; UMP biosynthesis via de novo pathway; UMP from orotate: step 1/2. In terms of biological role, catalyzes the transfer of a ribosyl phosphate group from 5-phosphoribose 1-diphosphate to orotate, leading to the formation of orotidine monophosphate (OMP). This is Orotate phosphoribosyltransferase from Nitrosococcus oceani (strain ATCC 19707 / BCRC 17464 / JCM 30415 / NCIMB 11848 / C-107).